The chain runs to 334 residues: Protein-methionine-sulfoxide reductase catalytic subunit MsrP (334 aa).

A signal peptide (tat-type signal) is located at residues 1 to 44; that stretch reads MKKNQFLKESDVTAESVFFMKRRQVLKALGISAAALSLPHAAHA. Mo-molybdopterin contacts are provided by residues asparagine 88, 91 to 92, cysteine 146, threonine 181, asparagine 233, arginine 238, and 249 to 251; these read YE and GIK.

The protein belongs to the MsrP family. As to quaternary structure, heterodimer of a catalytic subunit (MsrP) and a heme-binding subunit (MsrQ). The cofactor is Mo-molybdopterin. In terms of processing, predicted to be exported by the Tat system. The position of the signal peptide cleavage has not been experimentally proven.

The protein resides in the periplasm. The enzyme catalyses L-methionyl-[protein] + a quinone + H2O = L-methionyl-(S)-S-oxide-[protein] + a quinol. The catalysed reaction is L-methionyl-[protein] + a quinone + H2O = L-methionyl-(R)-S-oxide-[protein] + a quinol. Functionally, part of the MsrPQ system that repairs oxidized periplasmic proteins containing methionine sulfoxide residues (Met-O), using respiratory chain electrons. Thus protects these proteins from oxidative-stress damage caused by reactive species of oxygen and chlorine generated by the host defense mechanisms. MsrPQ is essential for the maintenance of envelope integrity under bleach stress, rescuing a wide series of structurally unrelated periplasmic proteins from methionine oxidation, including the primary periplasmic chaperone SurA and the lipoprotein Pal. The catalytic subunit MsrP is non-stereospecific, being able to reduce both (R-) and (S-) diastereoisomers of methionine sulfoxide. The protein is Protein-methionine-sulfoxide reductase catalytic subunit MsrP of Shigella sonnei (strain Ss046).